The sequence spans 171 residues: uncharacterized protein (171 aa).

One can recognise a PfpI endopeptidase domain in the interval 3 to 171 (KKVAIILANE…FNREIVKQLQ (169 aa)).

Belongs to the peptidase C56 family.

This is an uncharacterized protein from Staphylococcus aureus (strain MRSA252).